The chain runs to 198 residues: Recombination protein RecR (198 aa).

A C4-type zinc finger spans residues 56-71 (CGVCGNVDTSNPCGIC). In terms of domain architecture, Toprim spans 79–174 (RSICVVEEVA…RVTQLAHGLP (96 aa)).

It belongs to the RecR family.

May play a role in DNA repair. It seems to be involved in an RecBC-independent recombinational process of DNA repair. It may act with RecF and RecO. The polypeptide is Recombination protein RecR (Novosphingobium aromaticivorans (strain ATCC 700278 / DSM 12444 / CCUG 56034 / CIP 105152 / NBRC 16084 / F199)).